A 142-amino-acid polypeptide reads, in one-letter code: Large ribosomal subunit protein uL13 (142 aa).

It belongs to the universal ribosomal protein uL13 family. Part of the 50S ribosomal subunit.

Its function is as follows. This protein is one of the early assembly proteins of the 50S ribosomal subunit, although it is not seen to bind rRNA by itself. It is important during the early stages of 50S assembly. In Cupriavidus metallidurans (strain ATCC 43123 / DSM 2839 / NBRC 102507 / CH34) (Ralstonia metallidurans), this protein is Large ribosomal subunit protein uL13.